A 928-amino-acid polypeptide reads, in one-letter code: Mating-type protein A-alpha Y4 (928 aa).

The segment at residues 152-211 (GKRSRPKFHSEYTPVLELYFHFNAYPTYADRRILAEKTGMLTRQITVWFQNHRRRAKGPL) is a DNA-binding region (homeobox). Disordered regions lie at residues 255–296 (KSLA…EAGP), 310–329 (DSVSKKKSKKAKKEKASQQN), 340–359 (TATKEKRRKMKKLPRAAGQP), 406–451 (YAYV…HRVS), and 626–736 (ARRK…EQDL). Residues 344–353 (EKRRKMKKLP) are compositionally biased toward basic residues. Residues 635–657 (KALEEKQAKKDRKERQKASRSQR) show a composition bias toward basic and acidic residues. 2 stretches are compositionally biased toward low complexity: residues 668 to 682 (SRASSVASTSSLPAR) and 694 to 728 (ESAASSRATSVASSVRTPSLSSTSSRRSSGMSMPG).

The protein localises to the nucleus. In terms of biological role, specifies A-alpha-4 mating-type. May regulate the expression of genes specific to the homokaryotic cell type. The chain is Mating-type protein A-alpha Y4 from Schizophyllum commune (Split gill fungus).